Reading from the N-terminus, the 92-residue chain is Putative phosphotransferase enzyme IIB component SgcB (92 aa).

In terms of domain architecture, PTS EIIB type-2 spans 1–92 (MKKILVACGT…KQQIKALLTQ (92 aa)). Residue Cys-8 is the Phosphocysteine intermediate of the active site.

The protein localises to the cytoplasm. In terms of biological role, the phosphoenolpyruvate-dependent sugar phosphotransferase system (sugar PTS), a major carbohydrate active -transport system, catalyzes the phosphorylation of incoming sugar substrates concomitantly with their translocation across the cell membrane. The sequence is that of Putative phosphotransferase enzyme IIB component SgcB (sgcB) from Escherichia coli (strain K12).